Consider the following 378-residue polypeptide: Sphingosine 1-phosphate receptor 3 (378 aa).

Residues 1-40 (MATALPPRLQPVRGNETLREHYQYVGKLAGRLKEASEGST) lie on the Extracellular side of the membrane. Asn-15 carries an N-linked (GlcNAc...) asparagine glycan. A helical transmembrane segment spans residues 41 to 65 (LTTVLFLVICSFIVLENLMVLIAIW). Topologically, residues 66–72 (KNNKFHN) are cytoplasmic. A helical membrane pass occupies residues 73–101 (RMYFFIGNLALCDLLAGIAYKVNILMSGK). The Extracellular segment spans residues 102-115 (KTFSLSPTVWFLRE). A helical transmembrane segment spans residues 116 to 134 (GSMFVALGASTCSLLAIAI). At 135–153 (ERHLTMIKMRPYDANKRHR) the chain is on the cytoplasmic side. The chain crosses the membrane as a helical span at residues 154–179 (VFLLIGMCWLIAFTLGALPILGWNCL). Residues 180–195 (HNLPDCSTILPLYSKK) are Extracellular-facing. Residues 196 to 216 (YIAFCISIFTAILVTIVILYA) form a helical membrane-spanning segment. The Cytoplasmic segment spans residues 217-243 (RIYFLVKSSSRKVANHNNSERSMALLR). Residues 244-265 (TVVIVVSVFIACWSPLFILFLI) form a helical membrane-spanning segment. Residues 266–281 (DVACRVQACPILFKAQ) lie on the Extracellular side of the membrane. Residues 282–302 (WFIVLAVLNSAMNPVIYTLAS) traverse the membrane as a helical segment. At 303 to 378 (KEMRRAFFRL…AALQNGIFCN (76 aa)) the chain is on the cytoplasmic side. Ser-326 bears the Phosphoserine mark. Positions 327–357 (PIQPALDPSRSKSSSSNNSSHSPKVKEDLPH) are disordered. A compositionally biased stretch (low complexity) spans 337 to 348 (SKSSSSNNSSHS).

This sequence belongs to the G-protein coupled receptor 1 family. As to expression, expressed in all tissues, but most abundantly in heart, placenta, kidney, and liver.

It localises to the cell membrane. In terms of biological role, receptor for the lysosphingolipid sphingosine 1-phosphate (S1P). S1P is a bioactive lysophospholipid that elicits diverse physiological effect on most types of cells and tissues. When expressed in rat HTC4 hepatoma cells, is capable of mediating S1P-induced cell proliferation and suppression of apoptosis. This is Sphingosine 1-phosphate receptor 3 from Homo sapiens (Human).